The following is a 238-amino-acid chain: Ubiquinone biosynthesis O-methyltransferase (238 aa).

S-adenosyl-L-methionine is bound by residues R40, G59, D80, and M124.

This sequence belongs to the methyltransferase superfamily. UbiG/COQ3 family.

The catalysed reaction is a 3-demethylubiquinol + S-adenosyl-L-methionine = a ubiquinol + S-adenosyl-L-homocysteine + H(+). It carries out the reaction a 3-(all-trans-polyprenyl)benzene-1,2-diol + S-adenosyl-L-methionine = a 2-methoxy-6-(all-trans-polyprenyl)phenol + S-adenosyl-L-homocysteine + H(+). It participates in cofactor biosynthesis; ubiquinone biosynthesis. In terms of biological role, O-methyltransferase that catalyzes the 2 O-methylation steps in the ubiquinone biosynthetic pathway. This Ralstonia nicotianae (strain ATCC BAA-1114 / GMI1000) (Ralstonia solanacearum) protein is Ubiquinone biosynthesis O-methyltransferase.